A 189-amino-acid polypeptide reads, in one-letter code: Peptidyl-tRNA hydrolase (189 aa).

Tyrosine 14 provides a ligand contact to tRNA. Histidine 19 functions as the Proton acceptor in the catalytic mechanism. Residues tyrosine 64, asparagine 66, and asparagine 112 each contribute to the tRNA site.

It belongs to the PTH family. Monomer.

It localises to the cytoplasm. The enzyme catalyses an N-acyl-L-alpha-aminoacyl-tRNA + H2O = an N-acyl-L-amino acid + a tRNA + H(+). Its function is as follows. Hydrolyzes ribosome-free peptidyl-tRNAs (with 1 or more amino acids incorporated), which drop off the ribosome during protein synthesis, or as a result of ribosome stalling. In terms of biological role, catalyzes the release of premature peptidyl moieties from peptidyl-tRNA molecules trapped in stalled 50S ribosomal subunits, and thus maintains levels of free tRNAs and 50S ribosomes. In Dehalococcoides mccartyi (strain ATCC BAA-2100 / JCM 16839 / KCTC 5957 / BAV1), this protein is Peptidyl-tRNA hydrolase.